A 219-amino-acid polypeptide reads, in one-letter code: Protein DCL homolog, chloroplastic (219 aa).

A chloroplast-targeting transit peptide spans 1-48 (MSLASIPSSSPVASPYFRCRTYIFSFSSSPLCLYFPRGDSTSLRPRVR). Residues 70–96 (LRRPRIASEESSEEEEEEEEENSEGDE) form a disordered region. Positions 79–96 (ESSEEEEEEEEENSEGDE) are enriched in acidic residues.

In terms of tissue distribution, expressed in leaves, stems, flowers and siliques.

Its subcellular location is the plastid. The protein localises to the chloroplast. Its function is as follows. Required for normal plastid function and plant development. Required for correct plastid ribosome assembly. Required for processing and maturation of 4.5S rRNA. The protein is Protein DCL homolog, chloroplastic of Arabidopsis thaliana (Mouse-ear cress).